We begin with the raw amino-acid sequence, 429 residues long: Histidine--tRNA ligase (429 aa).

This sequence belongs to the class-II aminoacyl-tRNA synthetase family. Homodimer.

It is found in the cytoplasm. The catalysed reaction is tRNA(His) + L-histidine + ATP = L-histidyl-tRNA(His) + AMP + diphosphate + H(+). This Streptococcus pneumoniae serotype 19F (strain G54) protein is Histidine--tRNA ligase.